Consider the following 63-residue polypeptide: Large ribosomal subunit protein uL30 (63 aa).

This sequence belongs to the universal ribosomal protein uL30 family. As to quaternary structure, part of the 50S ribosomal subunit.

The polypeptide is Large ribosomal subunit protein uL30 (Bradyrhizobium sp. (strain ORS 278)).